A 466-amino-acid chain; its full sequence is Argininosuccinate lyase 1 (466 aa).

The protein belongs to the lyase 1 family. Argininosuccinate lyase subfamily.

It is found in the cytoplasm. It catalyses the reaction 2-(N(omega)-L-arginino)succinate = fumarate + L-arginine. The protein operates within amino-acid biosynthesis; L-arginine biosynthesis; L-arginine from L-ornithine and carbamoyl phosphate: step 3/3. The sequence is that of Argininosuccinate lyase 1 from Agrobacterium fabrum (strain C58 / ATCC 33970) (Agrobacterium tumefaciens (strain C58)).